The sequence spans 250 residues: Probable fimbrial chaperone YfcS (250 aa).

Residues 1–28 (MSDLLCSAKLGAMTLALLLSATSLSALA) form the signal peptide.

It belongs to the periplasmic pilus chaperone family.

Its subcellular location is the periplasm. Functionally, part of the yfcOPQRSUV fimbrial operon. Could contribute to adhesion to various surfaces in specific environmental niches. Increases adhesion to eukaryotic T24 bladder epithelial cells in the absence of fim genes. This Escherichia coli (strain K12) protein is Probable fimbrial chaperone YfcS (yfcS).